A 255-amino-acid chain; its full sequence is Hydroxyacylglutathione hydrolase (255 aa).

Zn(2+) is bound by residues His56, His58, Asp60, His61, His114, Asp133, and His171.

Belongs to the metallo-beta-lactamase superfamily. Glyoxalase II family. Monomer. Requires Zn(2+) as cofactor.

It carries out the reaction an S-(2-hydroxyacyl)glutathione + H2O = a 2-hydroxy carboxylate + glutathione + H(+). Its pathway is secondary metabolite metabolism; methylglyoxal degradation; (R)-lactate from methylglyoxal: step 2/2. Thiolesterase that catalyzes the hydrolysis of S-D-lactoyl-glutathione to form glutathione and D-lactic acid. This is Hydroxyacylglutathione hydrolase from Rhodopseudomonas palustris (strain BisA53).